The sequence spans 110 residues: uncharacterized protein (110 aa).

Helical transmembrane passes span 21–41 (IQLALANFFAISCLWLKPQIC) and 63–83 (PSMIHFLPLISLTFAFSIIVV).

Its subcellular location is the membrane. This is an uncharacterized protein from Saccharomyces cerevisiae (strain ATCC 204508 / S288c) (Baker's yeast).